Consider the following 519-residue polypeptide: 2-isopropylmalate synthase (519 aa).

Residues 5 to 267 form the Pyruvate carboxyltransferase domain; the sequence is VKIFDTTLRD…NTNIRSHEIS (263 aa). The Mn(2+) site is built by Asp-14, His-202, His-204, and Asn-238. The interval 392–519 is regulatory domain; sequence KLLYLQASSG…KKQQTQTAGV (128 aa).

The protein belongs to the alpha-IPM synthase/homocitrate synthase family. LeuA type 1 subfamily. As to quaternary structure, homodimer. Requires Mn(2+) as cofactor.

The protein resides in the cytoplasm. It carries out the reaction 3-methyl-2-oxobutanoate + acetyl-CoA + H2O = (2S)-2-isopropylmalate + CoA + H(+). Its pathway is amino-acid biosynthesis; L-leucine biosynthesis; L-leucine from 3-methyl-2-oxobutanoate: step 1/4. Functionally, catalyzes the condensation of the acetyl group of acetyl-CoA with 3-methyl-2-oxobutanoate (2-ketoisovalerate) to form 3-carboxy-3-hydroxy-4-methylpentanoate (2-isopropylmalate). The polypeptide is 2-isopropylmalate synthase (Pseudoalteromonas atlantica (strain T6c / ATCC BAA-1087)).